We begin with the raw amino-acid sequence, 133 residues long: Peptide methionine sulfoxide reductase MsrB (133 aa).

Positions 8-130 (LEEWRAMLDP…NSVCLDFKPR (123 aa)) constitute a MsrB domain. Zn(2+) contacts are provided by cysteine 47, cysteine 50, cysteine 96, and cysteine 99. Cysteine 119 acts as the Nucleophile in catalysis.

It belongs to the MsrB Met sulfoxide reductase family. Requires Zn(2+) as cofactor.

It catalyses the reaction L-methionyl-[protein] + [thioredoxin]-disulfide + H2O = L-methionyl-(R)-S-oxide-[protein] + [thioredoxin]-dithiol. The chain is Peptide methionine sulfoxide reductase MsrB from Pseudomonas putida (strain W619).